The chain runs to 202 residues: Orotate phosphoribosyltransferase (202 aa).

5-phospho-alpha-D-ribose 1-diphosphate is bound by residues K93 and 113–121 (EDIITTGGS). Orotate-binding residues include T117 and R145.

Belongs to the purine/pyrimidine phosphoribosyltransferase family. PyrE subfamily. In terms of assembly, homodimer. The cofactor is Mg(2+).

The catalysed reaction is orotidine 5'-phosphate + diphosphate = orotate + 5-phospho-alpha-D-ribose 1-diphosphate. The protein operates within pyrimidine metabolism; UMP biosynthesis via de novo pathway; UMP from orotate: step 1/2. Its function is as follows. Catalyzes the transfer of a ribosyl phosphate group from 5-phosphoribose 1-diphosphate to orotate, leading to the formation of orotidine monophosphate (OMP). The sequence is that of Orotate phosphoribosyltransferase from Campylobacter jejuni subsp. jejuni serotype O:23/36 (strain 81-176).